The primary structure comprises 137 residues: Large ribosomal subunit protein uL16 (137 aa).

Belongs to the universal ribosomal protein uL16 family. In terms of assembly, part of the 50S ribosomal subunit.

Binds 23S rRNA and is also seen to make contacts with the A and possibly P site tRNAs. This Francisella tularensis subsp. tularensis (strain FSC 198) protein is Large ribosomal subunit protein uL16.